The following is a 332-amino-acid chain: Glycerol-3-phosphate dehydrogenase [NAD(P)+] (332 aa).

Residues W15, R35, and K108 each contribute to the NADPH site. Sn-glycerol 3-phosphate is bound by residues K108, G137, and S139. An NADPH-binding site is contributed by A141. K192, D245, S255, R256, and N257 together coordinate sn-glycerol 3-phosphate. Catalysis depends on K192, which acts as the Proton acceptor. R256 is a binding site for NADPH. 2 residues coordinate NADPH: L278 and E280.

The protein belongs to the NAD-dependent glycerol-3-phosphate dehydrogenase family.

It localises to the cytoplasm. The catalysed reaction is sn-glycerol 3-phosphate + NAD(+) = dihydroxyacetone phosphate + NADH + H(+). It catalyses the reaction sn-glycerol 3-phosphate + NADP(+) = dihydroxyacetone phosphate + NADPH + H(+). Its pathway is membrane lipid metabolism; glycerophospholipid metabolism. Catalyzes the reduction of the glycolytic intermediate dihydroxyacetone phosphate (DHAP) to sn-glycerol 3-phosphate (G3P), the key precursor for phospholipid synthesis. The polypeptide is Glycerol-3-phosphate dehydrogenase [NAD(P)+] (Methylobacterium radiotolerans (strain ATCC 27329 / DSM 1819 / JCM 2831 / NBRC 15690 / NCIMB 10815 / 0-1)).